A 340-amino-acid polypeptide reads, in one-letter code: Homeobox protein DBX2 (340 aa).

A DNA-binding region (homeobox) is located at residues 185 to 244 (GILRRAVFSEDQRKALEKMFQKQKYISKTDRKKLAINLGLKESQVKIWFQNRRMKWRNSK). The tract at residues 283–313 (QQHPSPGWRENSPEPSERLIQGSPGAEALPP) is disordered.

This sequence belongs to the H2.0 homeobox family.

Its subcellular location is the nucleus. The chain is Homeobox protein DBX2 (DBX2) from Bos taurus (Bovine).